The following is a 370-amino-acid chain: Mitogen-activated protein kinase 3 (370 aa).

The 288-residue stretch at 32–319 folds into the Protein kinase domain; the sequence is YVPIKPIGRG…VTEALEHPYM (288 aa). Residues 38 to 46 and lysine 61 each bind ATP; that span reads IGRGAYGIV. Aspartate 158 serves as the catalytic Proton acceptor. Phosphothreonine is present on threonine 191. The TXY motif lies at 191–193; it reads TEY. At tyrosine 193 the chain carries Phosphotyrosine.

The protein belongs to the protein kinase superfamily. CMGC Ser/Thr protein kinase family. MAP kinase subfamily. Post-translationally, dually phosphorylated on Thr-191 and Tyr-193, which activates the enzyme.

It carries out the reaction L-seryl-[protein] + ATP = O-phospho-L-seryl-[protein] + ADP + H(+). The enzyme catalyses L-threonyl-[protein] + ATP = O-phospho-L-threonyl-[protein] + ADP + H(+). With respect to regulation, activated by threonine and tyrosine phosphorylation. This chain is Mitogen-activated protein kinase 3 (MPK3), found in Oryza sativa subsp. japonica (Rice).